Here is a 307-residue protein sequence, read N- to C-terminus: Methionyl-tRNA formyltransferase (307 aa).

108-111 (SLLP) contributes to the (6S)-5,6,7,8-tetrahydrofolate binding site.

It belongs to the Fmt family.

It carries out the reaction L-methionyl-tRNA(fMet) + (6R)-10-formyltetrahydrofolate = N-formyl-L-methionyl-tRNA(fMet) + (6S)-5,6,7,8-tetrahydrofolate + H(+). In terms of biological role, attaches a formyl group to the free amino group of methionyl-tRNA(fMet). The formyl group appears to play a dual role in the initiator identity of N-formylmethionyl-tRNA by promoting its recognition by IF2 and preventing the misappropriation of this tRNA by the elongation apparatus. The protein is Methionyl-tRNA formyltransferase of Xanthomonas euvesicatoria pv. vesicatoria (strain 85-10) (Xanthomonas campestris pv. vesicatoria).